The following is a 200-amino-acid chain: NADH-quinone oxidoreductase subunit C (200 aa).

This sequence belongs to the complex I 30 kDa subunit family. As to quaternary structure, NDH-1 is composed of 14 different subunits. Subunits NuoB, C, D, E, F, and G constitute the peripheral sector of the complex.

The protein resides in the cell inner membrane. It carries out the reaction a quinone + NADH + 5 H(+)(in) = a quinol + NAD(+) + 4 H(+)(out). In terms of biological role, NDH-1 shuttles electrons from NADH, via FMN and iron-sulfur (Fe-S) centers, to quinones in the respiratory chain. The immediate electron acceptor for the enzyme in this species is believed to be ubiquinone. Couples the redox reaction to proton translocation (for every two electrons transferred, four hydrogen ions are translocated across the cytoplasmic membrane), and thus conserves the redox energy in a proton gradient. The chain is NADH-quinone oxidoreductase subunit C from Burkholderia mallei (strain NCTC 10247).